We begin with the raw amino-acid sequence, 155 residues long: Nodulin-related protein 2 (155 aa).

The residue at position 1 (Met-1) is an N-acetylmethionine. Disordered stretches follow at residues 1–37 and 85–155; these read MNFI…PATN and DEKS…GFLK. A compositionally biased stretch (basic and acidic residues) spans 95–106; sequence DKAEKYLNDYES. Positions 120 to 130 are enriched in low complexity; the sequence is SQAEPASQPEP.

Interacts with DEK3.

May be a negative regulator of the ABA signaling/synthesis pathway. The protein is Nodulin-related protein 2 of Arabidopsis thaliana (Mouse-ear cress).